The chain runs to 309 residues: MITFLPIIFSSLVVVTFVIGNFANGFIALVNSIEWFKRQKISFADQILTALAVSRVGLLWVLLLNWYSTVLNPAFNSVEVRTTAYNIWAVINHFSNWLATTLSIFYLLKIANFSNFIFLHLKRRVKSVILVMLLGPLLFLACHLFVINMNEIVRTKEFEGNMTWKIKLKSAMYFSNMTVTMVANLVPFTLTLLSFMLLICSLCKHLKKMQLHGKGSQDPSTKVHIKALQTVISFLLLCAIYFLSIMISVWSFGSLENKPVFMFCKAIRFSYPSIHPFILIWGNKKLKQTFLSVFWQMRYWVKGEKTSSP.

Position 1 (methionine 1) is a topological domain, extracellular. The chain crosses the membrane as a helical span at residues 2–22 (ITFLPIIFSSLVVVTFVIGNF). The Cytoplasmic segment spans residues 23 to 46 (ANGFIALVNSIEWFKRQKISFADQ). A helical membrane pass occupies residues 47 to 67 (ILTALAVSRVGLLWVLLLNWY). Residues 68–86 (STVLNPAFNSVEVRTTAYN) are Extracellular-facing. Residues 87-107 (IWAVINHFSNWLATTLSIFYL) traverse the membrane as a helical segment. Topologically, residues 108–126 (LKIANFSNFIFLHLKRRVK) are cytoplasmic. The helical transmembrane segment at 127–147 (SVILVMLLGPLLFLACHLFVI) threads the bilayer. At 148-178 (NMNEIVRTKEFEGNMTWKIKLKSAMYFSNMT) the chain is on the extracellular side. Residues asparagine 161 and asparagine 176 are each glycosylated (N-linked (GlcNAc...) asparagine). A helical transmembrane segment spans residues 179-199 (VTMVANLVPFTLTLLSFMLLI). Residues 200–229 (CSLCKHLKKMQLHGKGSQDPSTKVHIKALQ) lie on the Cytoplasmic side of the membrane. Residues 230–250 (TVISFLLLCAIYFLSIMISVW) form a helical membrane-spanning segment. At 251 to 259 (SFGSLENKP) the chain is on the extracellular side. A helical transmembrane segment spans residues 260 to 280 (VFMFCKAIRFSYPSIHPFILI). Residues 281 to 309 (WGNKKLKQTFLSVFWQMRYWVKGEKTSSP) lie on the Cytoplasmic side of the membrane.

This sequence belongs to the G-protein coupled receptor T2R family. Expressed in subsets of taste receptor cells of the tongue and exclusively in gustducin-positive cells. Expressed in airway epithelia.

Its subcellular location is the membrane. It localises to the cell projection. The protein localises to the cilium membrane. Functionally, gustducin-coupled receptor immplicated in the perception of bitter compounds in the oral cavity and the gastrointestinal tract. Signals through PLCB2 and the calcium-regulated cation channel TRPM5. Activated by the sulfonyl amide sweeteners saccharin and acesulfame K. In airway epithelial cells, binding of bitter compounds increases the intracellular calcium ion concentration and stimulates ciliary beat frequency. May act as chemosensory receptors in airway epithelial cells to detect and eliminate potential noxious agents from the airways. The protein is Taste receptor type 2 member 43 (TAS2R43) of Homo sapiens (Human).